The sequence spans 309 residues: MVGHTESDVPPTMAVKIFSAGVAACVADIITFPLDTAKVRLQVGSAIQGECLISSAIRYKGVLGTIITLAKTEGPVKLYSGLPAGLQRQISFASLRIGLYDTVQEFFTTGKEASLGSKISAGLMTGGVAVFIGQPTEVVKVRLQAQSHLHGPKPRYTGTYNAYRIIATTEGLTGLWKGTTPNLTRNVIINCTELVTYDLMKEALVKNKLLADDVPCHFVSAVVAGFCTTVLSSPVDVVKTRFVNSSPGQYTSVPNCAMMMLTREGPSAFFKGFVPSFLRLGSWNIIMFVCFEQLKQELMKSRHTMDCAT.

Residues 2-10 (VGHTESDVP) are Mitochondrial intermembrane-facing. The helical transmembrane segment at 11–32 (PTMAVKIFSAGVAACVADIITF) threads the bilayer. 3 Solcar repeats span residues 11–106 (PTMA…VQEF), 113–203 (ASLG…MKEA), and 212–297 (DDVP…LKQE). Topologically, residues 33-77 (PLDTAKVRLQVGSAIQGECLISSAIRYKGVLGTIITLAKTEGPVK) are mitochondrial matrix. Lys-60 contributes to the fatty acid 16:0 binding site. Residues 78-100 (LYSGLPAGLQRQISFASLRIGLY) form a helical membrane-spanning segment. The Mitochondrial intermembrane portion of the chain corresponds to 101–118 (DTVQEFFTTGKEASLGSK). A helical membrane pass occupies residues 119 to 135 (ISAGLMTGGVAVFIGQP). Residues 136–180 (TEVVKVRLQAQSHLHGPKPRYTGTYNAYRIIATTEGLTGLWKGTT) lie on the Mitochondrial matrix side of the membrane. The helical transmembrane segment at 181 to 197 (PNLTRNVIINCTELVTY) threads the bilayer. The Mitochondrial intermembrane portion of the chain corresponds to 198–214 (DLMKEALVKNKLLADDV). A helical transmembrane segment spans residues 215–234 (PCHFVSAVVAGFCTTVLSSP). The Mitochondrial matrix portion of the chain corresponds to 235–268 (VDVVKTRFVNSSPGQYTSVPNCAMMMLTREGPSA). A Cysteine sulfenic acid (-SOH) modification is found at Cys-256. Residues 269-291 (FFKGFVPSFLRLGSWNIIMFVCF) form a helical membrane-spanning segment. Lys-271 provides a ligand contact to fatty acid 16:0. Topologically, residues 292–309 (EQLKQELMKSRHTMDCAT) are mitochondrial intermembrane.

This sequence belongs to the mitochondrial carrier (TC 2.A.29) family. As to quaternary structure, most probably functions as a monomer. Binds one purine nucleotide per monomer. However, has also been suggested to function as a homodimer or a homotetramer. Tightly associates with cardiolipin in the mitochondrion inner membrane; may stabilize and regulate its activity. In terms of processing, may undergo sulfenylation upon cold exposure. May increase the sensitivity of UCP1 thermogenic function to the activation by noradrenaline probably through structural effects. Post-translationally, may undergo ubiquitin-mediated proteasomal degradation.

It localises to the mitochondrion inner membrane. The catalysed reaction is H(+)(in) = H(+)(out). Its activity is regulated as follows. Has no constitutive proton transporter activity and has to be activated by long-chain fatty acids/LCFAs. Inhibited by purine nucleotides. Both purine nucleotides and LCFAs bind the cytosolic side of the transporter and directly compete to activate or inhibit it. Activated by noradrenaline and reactive oxygen species. Despite lacking canonical translational encoding for selenocysteine, a small pool of the protein has been observed to selectively incorporate selenocysteine at 'Cys-256'. Selenocysteine-modified protein is highly sensitive to redox modification and may constitute a pool of protein highly sensitive to activation by elevated levels of reactive oxygen species (ROS). Mitochondrial protein responsible for thermogenic respiration, a specialized capacity of brown adipose tissue and beige fat that participates in non-shivering adaptive thermogenesis to temperature and diet variations and more generally to the regulation of energy balance. Functions as a long-chain fatty acid/LCFA and proton symporter, simultaneously transporting one LCFA and one proton through the inner mitochondrial membrane. However, LCFAs remaining associated with the transporter via their hydrophobic tails, it results in an apparent transport of protons activated by LCFAs. Thereby, dissipates the mitochondrial proton gradient and converts the energy of substrate oxydation into heat instead of ATP. Regulates the production of reactive oxygen species/ROS by mitochondria. The polypeptide is Mitochondrial brown fat uncoupling protein 1 (Bos taurus (Bovine)).